Here is a 364-residue protein sequence, read N- to C-terminus: Spermidine/putrescine import ATP-binding protein PotA (364 aa).

Residues I10–I244 enclose the ABC transporter domain. G46–T53 contributes to the ATP binding site.

This sequence belongs to the ABC transporter superfamily. Spermidine/putrescine importer (TC 3.A.1.11.1) family. The complex is composed of two ATP-binding proteins (PotA), two transmembrane proteins (PotB and PotC) and a solute-binding protein (PotD).

It localises to the cell inner membrane. It carries out the reaction ATP + H2O + polyamine-[polyamine-binding protein]Side 1 = ADP + phosphate + polyamineSide 2 + [polyamine-binding protein]Side 1.. Its function is as follows. Part of the ABC transporter complex PotABCD involved in spermidine/putrescine import. Responsible for energy coupling to the transport system. This is Spermidine/putrescine import ATP-binding protein PotA from Mesorhizobium japonicum (strain LMG 29417 / CECT 9101 / MAFF 303099) (Mesorhizobium loti (strain MAFF 303099)).